A 150-amino-acid polypeptide reads, in one-letter code: uncharacterized protein (150 aa).

The interval 49–88 (KEWAENASTDEIDDFLTHDDETERDADPSSGSGPELMNKA) is disordered. The span at 63-75 (FLTHDDETERDAD) shows a compositional bias: basic and acidic residues.

This is an uncharacterized protein from Bacillus subtilis (strain 168).